The chain runs to 634 residues: uncharacterized protein (634 aa).

The N-terminal stretch at 1 to 40 (MWLQQRLKGLPGLLSSSWARRLLCLLGLLVLLLWFASSGA) is a signal peptide. Over 41-589 (RRAAGGLHLP…DEHMAQQDPG (549 aa)) the chain is Extracellular. Asn363 is a glycosylation site (N-linked (GlcNAc...) asparagine). The chain crosses the membrane as a helical span at residues 590 to 610 (LPFLFWFSVASLITLFHLFLF). The Cytoplasmic segment spans residues 611 to 634 (KLIYNEYCGPGAKPLFRSKEDPSV).

The protein resides in the membrane. This is an uncharacterized protein from Mus musculus (Mouse).